The chain runs to 156 residues: Small ribosomal subunit protein uS7 (156 aa).

This sequence belongs to the universal ribosomal protein uS7 family. Part of the 30S ribosomal subunit. Contacts proteins S9 and S11.

In terms of biological role, one of the primary rRNA binding proteins, it binds directly to 16S rRNA where it nucleates assembly of the head domain of the 30S subunit. Is located at the subunit interface close to the decoding center, probably blocks exit of the E-site tRNA. The polypeptide is Small ribosomal subunit protein uS7 (Dehalococcoides mccartyi (strain ATCC BAA-2100 / JCM 16839 / KCTC 5957 / BAV1)).